The following is a 282-amino-acid chain: Acetyl-coenzyme A carboxylase carboxyl transferase subunit beta (282 aa).

The CoA carboxyltransferase N-terminal domain occupies 26–282; it reads GLWHQTPTGK…VSKTVKLLVH (257 aa).

It belongs to the AccD/PCCB family. As to quaternary structure, acetyl-CoA carboxylase is a heterohexamer composed of biotin carboxyl carrier protein (AccB), biotin carboxylase (AccC) and two subunits each of ACCase subunit alpha (AccA) and ACCase subunit beta (AccD).

It is found in the cytoplasm. It catalyses the reaction N(6)-carboxybiotinyl-L-lysyl-[protein] + acetyl-CoA = N(6)-biotinyl-L-lysyl-[protein] + malonyl-CoA. It participates in lipid metabolism; malonyl-CoA biosynthesis; malonyl-CoA from acetyl-CoA: step 1/1. Functionally, component of the acetyl coenzyme A carboxylase (ACC) complex. Biotin carboxylase (BC) catalyzes the carboxylation of biotin on its carrier protein (BCCP) and then the CO(2) group is transferred by the transcarboxylase to acetyl-CoA to form malonyl-CoA. This is Acetyl-coenzyme A carboxylase carboxyl transferase subunit beta from Flavobacteriaceae bacterium (strain 3519-10).